A 1105-amino-acid chain; its full sequence is Pheromone-regulated membrane protein 10 (1105 aa).

Positions 1-11 (MSDNRPTYDTS) are enriched in polar residues. Disordered stretches follow at residues 1 to 22 (MSDNRPTYDTSSSDEEPSNHFH), 36 to 55 (RKQNHKKHEKPTIAKQTASN), 65 to 123 (GSNH…FYGD), 151 to 278 (IKPK…GGGL), 385 to 473 (AGAS…FLRG), and 520 to 656 (EQKS…LRHK). A compositionally biased stretch (low complexity) spans 67-82 (NHKFGNSINNNNNNAN). A compositionally biased stretch (polar residues) spans 85–106 (LGSSSAGTNRRSLISPTSSTHV). Residues 162-178 (DSSDDDGNNLDEVEDET) are compositionally biased toward acidic residues. Over residues 185–197 (LNQNHPPQQYYET) the composition is skewed to polar residues. Positions 198–210 (DSSDEDEEDDDEV) are enriched in acidic residues. Polar residues predominate over residues 390–413 (LDHSQQSSAAPSTEITPSQSPNQH). The segment covering 417–439 (EKSNNNENNQQSTTVESSSSTSS) has biased composition (low complexity). Over residues 446–459 (LARRRASEERKKAE) the composition is skewed to basic and acidic residues. Polar residues-rich tracts occupy residues 520–539 (EQKSASSLSRVSTGTSGTAL), 592–606 (RTNTVETQGSSNSEE), and 624–633 (MNANLPSFQN). 10 consecutive transmembrane segments (helical) span residues 782 to 802 (PPWLCVLFYGLGSLAVTPFAF), 809 to 829 (LPISFGVGLCVGYLQFYVSSI), 835 to 855 (SVFEVSAAIVVAFIARGIGSI), 860 to 880 (LFCFSAIAQGSLAIILPGYII), 903 to 923 (VIYSLFLGFGITLGAALYGWI), 938 to 958 (AIDEKWRILFVPMFALCLGLI), 963 to 983 (WSQVPIMIVIAGIGYIGSFFA), 986 to 1006 (HFSTVTEFTACIGAFIVGVLG), 1015 to 1035 (GMAVSAMLPAIFVQVPSGIAS), and 1075 to 1095 (VEVSIGISVGLFAAALIIYPF).

Belongs to the ThrE exporter (TC 2.A.79) family.

It is found in the membrane. The polypeptide is Pheromone-regulated membrane protein 10 (PRM10) (Candida albicans (strain SC5314 / ATCC MYA-2876) (Yeast)).